Here is a 141-residue protein sequence, read N- to C-terminus: Hemoglobin subunit alpha-D (141 aa).

Residues 1–141 (VLTAEDRRLL…VADVLSEKYR (141 aa)) enclose the Globin domain. Histidine 57 and histidine 87 together coordinate heme b.

It belongs to the globin family. As to quaternary structure, the deoxy-Hb is a heterotetramer of two alpha and two beta chains, but oxygenation results in dissociation to dimers. As to expression, red blood cells.

In terms of biological role, involved in oxygen transport from the lung to the various peripheral tissues. This chain is Hemoglobin subunit alpha-D (HBAD), found in Erythrolamprus miliaris (South American water snake).